We begin with the raw amino-acid sequence, 554 residues long: Eukaryotic translation initiation factor 3 subunit D-2 (554 aa).

The segment at arginine 116–glycine 149 is disordered. Residues alanine 120 to tyrosine 140 are compositionally biased toward gly residues. The tract at residues glutamine 291–proline 305 is RNA gate. Positions phenylalanine 532–asparagine 554 are disordered.

The protein belongs to the eIF-3 subunit D family. As to quaternary structure, component of the eukaryotic translation initiation factor 3 (eIF-3) complex. The eIF-3 complex interacts with pix.

The protein resides in the cytoplasm. Functionally, mRNA cap-binding component of the eukaryotic translation initiation factor 3 (eIF-3) complex, which is involved in protein synthesis of a specialized repertoire of mRNAs and, together with other initiation factors, stimulates binding of mRNA and methionyl-tRNAi to the 40S ribosome. The eIF-3 complex specifically targets and initiates translation of a subset of mRNAs involved in cell proliferation. In the eIF-3 complex, eif3d specifically recognizes and binds the 7-methylguanosine cap of a subset of mRNAs. The chain is Eukaryotic translation initiation factor 3 subunit D-2 from Drosophila virilis (Fruit fly).